Consider the following 870-residue polypeptide: Serine protease DegP homolog (870 aa).

A signal peptide spans 1–29; it reads MDIIFCTPTYCKIMLMIIMLISLRTRCDT. The disordered stretch occupies residues 128–151; that stretch reads KNPLNDNFKNPKLRKHSPNNKKNK. Over residues 138–151 the composition is skewed to basic residues; sequence PKLRKHSPNNKKNK. Catalysis depends on charge relay system residues H328, D359, and S437.

This sequence belongs to the peptidase S1C family. As to quaternary structure, oligomer; may form trimers or hexamers. Forms a complex at least composed of DegP, ENO and HSP70.

It localises to the cytoplasm. It is found in the parasitophorous vacuole. The protein resides in the host cell membrane. The protein localises to the host cytoplasm. Serine protease which also acts as a protein chaperone. Plays a role in the parasite development in host erythrocytes possibly by protecting it against thermal and oxidative stresses. This chain is Serine protease DegP homolog, found in Plasmodium falciparum (isolate 3D7).